Consider the following 379-residue polypeptide: MRIDEWLSSRLAKTKAAGLYRSLKLPQAERTNWASNDYLGLANDKRLIHAAETALRRFGAGSTGSRLTSGNTAWHEKLERKIAGFKQTEAALLFSSGYLANVGVLSSLPEKGDVILSDQLNHASIIDGCRLSKADTVVYRHKDMNDLEEKLRAAQSRARRFIVTDGVFSMDGTIAPLDEIMLLAKQYRAFVIVDDAHATGVLGEAGRGTSEYFGVSPDVVIGTLSKAVGAEGGFVAGSKTLIDFLLNHARTFIFQTAVPPASCAAACKALDIIEDSRAKRRLLQSSVNTIKRSLVDIGFTVNGEDTPIIPVMIGDPQKAVQFANGLKEKGIEAPAIRPPTVAEGESRIRLTVTAERRLKDIEDLLEGFKLMGRELNLVK.

R21 is a binding site for substrate. 97 to 98 (GY) contributes to the pyridoxal 5'-phosphate binding site. Residue H122 participates in substrate binding. Residues S169, 194–197 (DDAH), and 223–226 (TLSK) each bind pyridoxal 5'-phosphate. K226 is modified (N6-(pyridoxal phosphate)lysine). T340 lines the substrate pocket.

It belongs to the class-II pyridoxal-phosphate-dependent aminotransferase family. BioF subfamily. As to quaternary structure, homodimer. Requires pyridoxal 5'-phosphate as cofactor.

The enzyme catalyses 6-carboxyhexanoyl-[ACP] + L-alanine + H(+) = (8S)-8-amino-7-oxononanoate + holo-[ACP] + CO2. The protein operates within cofactor biosynthesis; biotin biosynthesis. Functionally, catalyzes the decarboxylative condensation of pimeloyl-[acyl-carrier protein] and L-alanine to produce 8-amino-7-oxononanoate (AON), [acyl-carrier protein], and carbon dioxide. This Bacillus licheniformis (strain ATCC 14580 / DSM 13 / JCM 2505 / CCUG 7422 / NBRC 12200 / NCIMB 9375 / NCTC 10341 / NRRL NRS-1264 / Gibson 46) protein is Putative 8-amino-7-oxononanoate synthase (bioF).